Consider the following 209-residue polypeptide: MGKNKQSESSKRWLKEHFDDKYVIKAKKQGLRSRAVFKLEEIQAKDGLIKPGMTVVDLGAAPGGWSQYAVKQVGDNGHVIACDILSMDPLPGVDFLMGDFREEAVLDALLNKIGGKNVDVVMSDMAPNMTGNDTADQAKSMYLVELSLDMCRQVLKKNGSYTVKVFMGEGFDQFFNEVKNAFKVVKTRKPDSSRARSREVYLVATGFKL.

Positions 63, 65, 83, 99, and 124 each coordinate S-adenosyl-L-methionine. The active-site Proton acceptor is Lys-164.

This sequence belongs to the class I-like SAM-binding methyltransferase superfamily. RNA methyltransferase RlmE family.

It localises to the cytoplasm. It catalyses the reaction uridine(2552) in 23S rRNA + S-adenosyl-L-methionine = 2'-O-methyluridine(2552) in 23S rRNA + S-adenosyl-L-homocysteine + H(+). Its function is as follows. Specifically methylates the uridine in position 2552 of 23S rRNA at the 2'-O position of the ribose in the fully assembled 50S ribosomal subunit. This Pseudoalteromonas atlantica (strain T6c / ATCC BAA-1087) protein is Ribosomal RNA large subunit methyltransferase E.